The primary structure comprises 368 residues: UDP-N-acetylglucosamine--N-acetylmuramyl-(pentapeptide) pyrophosphoryl-undecaprenol N-acetylglucosamine transferase (368 aa).

UDP-N-acetyl-alpha-D-glucosamine is bound by residues 10–12, asparagine 128, arginine 170, serine 199, isoleucine 250, and glutamine 295; that span reads TGG.

The protein belongs to the glycosyltransferase 28 family. MurG subfamily.

The protein resides in the cell inner membrane. It catalyses the reaction di-trans,octa-cis-undecaprenyl diphospho-N-acetyl-alpha-D-muramoyl-L-alanyl-D-glutamyl-meso-2,6-diaminopimeloyl-D-alanyl-D-alanine + UDP-N-acetyl-alpha-D-glucosamine = di-trans,octa-cis-undecaprenyl diphospho-[N-acetyl-alpha-D-glucosaminyl-(1-&gt;4)]-N-acetyl-alpha-D-muramoyl-L-alanyl-D-glutamyl-meso-2,6-diaminopimeloyl-D-alanyl-D-alanine + UDP + H(+). Its pathway is cell wall biogenesis; peptidoglycan biosynthesis. Cell wall formation. Catalyzes the transfer of a GlcNAc subunit on undecaprenyl-pyrophosphoryl-MurNAc-pentapeptide (lipid intermediate I) to form undecaprenyl-pyrophosphoryl-MurNAc-(pentapeptide)GlcNAc (lipid intermediate II). This Chlorobium phaeovibrioides (strain DSM 265 / 1930) (Prosthecochloris vibrioformis (strain DSM 265)) protein is UDP-N-acetylglucosamine--N-acetylmuramyl-(pentapeptide) pyrophosphoryl-undecaprenol N-acetylglucosamine transferase.